Reading from the N-terminus, the 283-residue chain is Pantothenate synthetase (283 aa).

30-37 (MGYFHEGH) serves as a coordination point for ATP. The Proton donor role is filled by H37. Q61 contacts (R)-pantoate. A beta-alanine-binding site is contributed by Q61. 147–150 (GEKD) contributes to the ATP binding site. Residue Q153 coordinates (R)-pantoate. ATP-binding positions include V176 and 184-187 (MSSR).

This sequence belongs to the pantothenate synthetase family. In terms of assembly, homodimer.

Its subcellular location is the cytoplasm. The catalysed reaction is (R)-pantoate + beta-alanine + ATP = (R)-pantothenate + AMP + diphosphate + H(+). It participates in cofactor biosynthesis; (R)-pantothenate biosynthesis; (R)-pantothenate from (R)-pantoate and beta-alanine: step 1/1. Functionally, catalyzes the condensation of pantoate with beta-alanine in an ATP-dependent reaction via a pantoyl-adenylate intermediate. This chain is Pantothenate synthetase, found in Syntrophobacter fumaroxidans (strain DSM 10017 / MPOB).